A 130-amino-acid chain; its full sequence is Small ribosomal subunit protein uS8 (130 aa).

Belongs to the universal ribosomal protein uS8 family. As to quaternary structure, part of the 30S ribosomal subunit. Contacts proteins S5 and S12.

One of the primary rRNA binding proteins, it binds directly to 16S rRNA central domain where it helps coordinate assembly of the platform of the 30S subunit. The sequence is that of Small ribosomal subunit protein uS8 from Shewanella loihica (strain ATCC BAA-1088 / PV-4).